The sequence spans 119 residues: Protein BEX4 (119 aa).

The interval 1-53 (MESKEELAANNLNGENAQQENEGREQAPTQNEETRHLGGGEGQKPGGNIRRGR) is disordered. Over residues 8 to 20 (AANNLNGENAQQE) the composition is skewed to low complexity. An interaction with SIRT2 region spans residues 31–89 (NEETRHLGGGEGQKPGGNIRRGRVRRLVPNFRWAIPNRHIEHNEARDDVERFVGQMMEI). The segment at 31–119 (NEETRHLGGG…DNHYDFCLIP (89 aa)) is interaction with alpha-tubulin. Residue cysteine 116 participates in Zn(2+) binding.

Belongs to the BEX family. In terms of assembly, interacts with alpha-tubulin. Interacts with SIRT2. In terms of processing, ubiquitinated and degraded by the proteasome.

It is found in the cytoplasm. The protein resides in the cytoskeleton. The protein localises to the spindle pole. It localises to the nucleus. May play a role in microtubule deacetylation by negatively regulating the SIRT2 deacetylase activity toward alpha-tubulin and thereby participate in the control of cell cycle progression and genomic stability. In absence of reductive stress, acts as a pseudosubstrate for the CRL2(FEM1B) complex: associates with FEM1B via zinc, thereby preventing association between FEM1B and its substrates. This Pongo abelii (Sumatran orangutan) protein is Protein BEX4.